A 520-amino-acid polypeptide reads, in one-letter code: Cytochrome P450 84A1 (520 aa).

At methionine 1 the chain carries N-acetylmethionine. Residues 12–32 (LSDPTTSLVIVVSLFIFISFI) form a helical membrane-spanning segment. Residue cysteine 458 participates in heme binding.

This sequence belongs to the cytochrome P450 family. Requires heme as cofactor.

The protein resides in the membrane. The protein operates within aromatic compound metabolism; phenylpropanoid biosynthesis. The chain is Cytochrome P450 84A1 (CYP84A1) from Arabidopsis thaliana (Mouse-ear cress).